The chain runs to 160 residues: Cathelin-related peptide SC5 (160 aa).

A signal peptide spans 1–29; sequence METQRASLSLGRRSLWLLLLGLVLASASA. A propeptide spanning residues 30–131 is cleaved from the precursor; that stretch reads QALSYREAVL…DITCAEPQSV (102 aa). 2 disulfide bridges follow: C86-C97 and C108-C125.

The protein belongs to the cathelicidin family.

The protein localises to the secreted. In terms of biological role, broad spectrum bactericidal agent. This is Cathelin-related peptide SC5 from Ovis aries (Sheep).